A 495-amino-acid polypeptide reads, in one-letter code: Lysine--tRNA ligase (495 aa).

Mg(2+) contacts are provided by glutamate 406 and glutamate 413.

The protein belongs to the class-II aminoacyl-tRNA synthetase family. As to quaternary structure, homodimer. The cofactor is Mg(2+).

It localises to the cytoplasm. It catalyses the reaction tRNA(Lys) + L-lysine + ATP = L-lysyl-tRNA(Lys) + AMP + diphosphate. In Staphylococcus saprophyticus subsp. saprophyticus (strain ATCC 15305 / DSM 20229 / NCIMB 8711 / NCTC 7292 / S-41), this protein is Lysine--tRNA ligase.